Reading from the N-terminus, the 148-residue chain is Large ribosomal subunit protein bL9 (148 aa).

This sequence belongs to the bacterial ribosomal protein bL9 family.

In terms of biological role, binds to the 23S rRNA. This is Large ribosomal subunit protein bL9 from Pseudomonas putida (strain ATCC 700007 / DSM 6899 / JCM 31910 / BCRC 17059 / LMG 24140 / F1).